The chain runs to 487 residues: 6-phosphogluconate dehydrogenase, decarboxylating 1, chloroplastic (487 aa).

M1 carries the N-acetylmethionine modification. NADP(+) contacts are provided by residues 13 to 18 (GLAVMG), 36 to 38 (NRT), 80 to 82 (VKA), and N108. Substrate is bound by residues N108 and 134–136 (SGG). Catalysis depends on K188, which acts as the Proton acceptor. 191–192 (HN) serves as a coordination point for substrate. The active-site Proton donor is the E195. Positions 196, 266, 293, 458, and 464 each coordinate substrate.

It belongs to the 6-phosphogluconate dehydrogenase family. In terms of assembly, forms homodimer. Forms heterodimers with PGD2 or PGD3.

It is found in the plastid. It localises to the chloroplast. The protein localises to the cytoplasm. The protein resides in the cytosol. It carries out the reaction 6-phospho-D-gluconate + NADP(+) = D-ribulose 5-phosphate + CO2 + NADPH. It functions in the pathway carbohydrate degradation; pentose phosphate pathway; D-ribulose 5-phosphate from D-glucose 6-phosphate (oxidative stage): step 3/3. Catalyzes the oxidative decarboxylation of 6-phosphogluconate to ribulose 5-phosphate and CO(2), with concomitant reduction of NADP to NADPH. This is 6-phosphogluconate dehydrogenase, decarboxylating 1, chloroplastic from Arabidopsis thaliana (Mouse-ear cress).